We begin with the raw amino-acid sequence, 293 residues long: MTRRRPERRRDLLGLLGETPVDLSQANDIRALPVNELKVGSTQPRRSFDLERLSELAESIRAHGVLQPLLVRSVDGQYEIVAGERRWRAAQLAGLAEVPVVVRQLSNEQARAAALIENLQRDNLNVIDEVDGKLELIALTLGLEREEARKRLMQLLRAVPGDEHEQLDQVFRSMGETWRTFAKNKLRILNWPQPVLEALRAGLPLTLGSVVASAPPERQAELLKLAQNGASRSQLLQALQTPSQTSAVTPEHFAKVLSSKRFLSGLDTPTREALDRWLARMPERVRQAIDEQS.

The protein belongs to the ParB family.

Its function is as follows. Involved in chromosome partition. Localize to both poles of the predivisional cell following completion of DNA replication. Binds to the DNA origin of replication. This Deinococcus radiodurans (strain ATCC 13939 / DSM 20539 / JCM 16871 / CCUG 27074 / LMG 4051 / NBRC 15346 / NCIMB 9279 / VKM B-1422 / R1) protein is Probable chromosome 2-partitioning protein ParB (parB2).